Consider the following 21-residue polypeptide: Brevinin-1OKb (21 aa).

Lys-21 carries the lysine amide modification.

As to expression, expressed by the skin glands.

The protein localises to the secreted. Antimicrobial peptide. In Nidirana okinavana (Kampira Falls frog), this protein is Brevinin-1OKb.